The chain runs to 64 residues: Small hydrophobic protein (64 aa).

Over 1–20 (MENTSITIEFSSKFWPYFTL) the chain is Intravirion. An interaction with host BCAP31 region spans residues 6 to 15 (ITIEFSSKFW). The helical; Signal-anchor for type II membrane protein transmembrane segment at 21–44 (IHMITTIISLLIIISIMIAILNKL) threads the bilayer. The tract at residues 38-43 (IAILNK) is interaction with small-molecule inhibitor. Residues 45-64 (CEYNVFHNKTFELPRARVNT) are Virion surface-facing. Asn52 carries an N-linked (GlcNAc...) asparagine; by host glycan.

This sequence belongs to the orthopneumovirus small hydrophobic protein family. As to quaternary structure, homopentamer forming a funnel-like pore. Interacts with glycoprotein G; this interaction occurs on the surface of virion particles and infected cells. Interacts with host BCAP31 (via C-terminus); this interaction is direct. Post-translationally, four species of SH have been detected in infected cell cytoplasm: a 7.5 kDa non-glycosylated form (SH0), a 13-15 kDa form that contains one or two N-linked carbohydrate side chains of the high-mannose type (SHg), a 21-30 kDa polylactosaminoglycan-modified form of the protein (SHp), and the isoform generated by alternative translational initiation. Of these different forms, SH0 is by far the most abundant protein detected during virus infection. In terms of processing, tyrosine phosphorylated.

It localises to the virion membrane. The protein resides in the host cell membrane. It is found in the host Golgi apparatus membrane. Its subcellular location is the host endoplasmic reticulum membrane. With respect to regulation, channel activity is inhibited by copper. Also inhibited by small-molecule pyronin B. Its function is as follows. Viroporin that forms a homopentameric ion channel displaying low ion selectivity. May play a role in virus morphogenesis and pathogenicity at various stages of the viral life cycle. Accumulates at the membrane of the Golgi apparatus in infected cells and may facilitate virus release by modifying the secretory pathway. May enhance host membrane permeability and disrupt cellular ion homeostasis, which can be sensed as damage-associated molecular patterns/danger signals, triggering NLRP3 inflammasome activation and inflammatory immune response. Also inhibits host TNFA-mediated signaling pathway and may delay apoptosis, allowing time for the virus to replicate. This chain is Small hydrophobic protein, found in Homo sapiens (Human).